Consider the following 1367-residue polypeptide: MAP3K epsilon protein kinase 2 (1367 aa).

The region spanning 20-274 (YMLGDEIGKG…AKTLLSHPWI (255 aa)) is the Protein kinase domain. 2 HEAT repeats span residues 25-62 (EIGK…EDLN) and 86-125 (LKTK…TVYI). ATP is bound by residues 26-34 (IGKGAYGRV) and Lys-49. The Proton acceptor role is filled by Asp-144. The HEAT 3 repeat unit spans residues 218–256 (PYYDLQPMPALYRIVQDDTPPIPDSLSPDITDFLRLCFK). Disordered regions lie at residues 285-422 (LRHS…GRRN) and 437-513 (SSHS…VADG). A compositionally biased stretch (basic and acidic residues) spans 293-306 (YMKETDSSSEKDAE). Residues 351 to 363 (LGEEGTDSEDDIN) show a composition bias toward acidic residues. Residues 378–396 (RQSGTCSISSDAKGTSQDV) show a composition bias toward polar residues. Composition is skewed to basic and acidic residues over residues 397-408 (LENHEKYDRDEI) and 475-491 (SLHD…EGKT). Residues 492–507 (NEASTSTPTANVNQGD) show a composition bias toward polar residues. HEAT repeat units lie at residues 538–576 (SQDG…LFPL), 577–614 (QAVE…RPGQ), 633–658 (IPKS…DFLE), 659–700 (NACL…SSPL), and 704–742 (MFIS…VFKL). Positions 792–860 (PRARSGQLDP…LHPDGDRPRL (69 aa)) are disordered. 2 stretches are compositionally biased toward polar residues: residues 799–814 (LDPN…TSPS) and 835–845 (ALTSNSQSSDV). Over residues 846-859 (HQPDALHPDGDRPR) the composition is skewed to basic and acidic residues. 10 HEAT repeats span residues 850 to 888 (ALHP…STDK), 906 to 943 (DQVR…HESR), 1045 to 1066 (DYLE…TVKS), 1067 to 1105 (YMCS…DPNC), 1112 to 1150 (ADAI…INKR), 1154 to 1191 (QAAE…ASRN), 1196 to 1236 (LRAH…KVEQ), 1257 to 1280 (RHFV…NKTL), 1281 to 1317 (ALNG…KHPK), and 1347 to 1367 (QVLV…NTIL).

Belongs to the protein kinase superfamily. Ser/Thr protein kinase family. In terms of processing, autophosphorylated. Expressed in both the sporophytic and the gametophytic tissues, especially in dividing cells. Mostly present in flower buds and mature flowers. Also accumulates in embryos and in roots.

Its subcellular location is the cytoplasm. It localises to the cytoskeleton. The protein localises to the microtubule organizing center. The protein resides in the nucleus. It is found in the nucleolus. Its subcellular location is the cell membrane. The enzyme catalyses L-seryl-[protein] + ATP = O-phospho-L-seryl-[protein] + ADP + H(+). It carries out the reaction L-threonyl-[protein] + ATP = O-phospho-L-threonyl-[protein] + ADP + H(+). Its function is as follows. Serine/threonine-protein kinase involved in the spatial and temporal control system organizing cortical activities in mitotic and postmitotic cells. Required for the normal functioning of the plasma membrane in developing pollen. Involved in the regulation of cell expansion and embryo development. This chain is MAP3K epsilon protein kinase 2, found in Arabidopsis thaliana (Mouse-ear cress).